The chain runs to 532 residues: Phosphoenolpyruvate carboxykinase (ATP) (532 aa).

Arg-60, Tyr-194, and Lys-200 together coordinate substrate. Residues Lys-200, His-219, and 237-245 (GLSGTGKTT) each bind ATP. The Mn(2+) site is built by Lys-200 and His-219. Asp-258 is a binding site for Mn(2+). ATP is bound by residues Glu-286, Arg-324, and Thr-449. Arg-324 contacts substrate.

The protein belongs to the phosphoenolpyruvate carboxykinase (ATP) family. Requires Mn(2+) as cofactor.

Its subcellular location is the cytoplasm. It catalyses the reaction oxaloacetate + ATP = phosphoenolpyruvate + ADP + CO2. It functions in the pathway carbohydrate biosynthesis; gluconeogenesis. Its function is as follows. Involved in the gluconeogenesis. Catalyzes the conversion of oxaloacetate (OAA) to phosphoenolpyruvate (PEP) through direct phosphoryl transfer between the nucleoside triphosphate and OAA. This chain is Phosphoenolpyruvate carboxykinase (ATP), found in Cereibacter sphaeroides (strain ATCC 17029 / ATH 2.4.9) (Rhodobacter sphaeroides).